Reading from the N-terminus, the 555-residue chain is Membrane protein insertase YidC (555 aa).

A helical membrane pass occupies residues 7 to 24; that stretch reads ILWVIFSMSLVLLYDNWQ. Positions 61 to 81 are disordered; that stretch reads TAGAAAPAAPGGAPQAAAQPT. 5 consecutive transmembrane segments (helical) span residues 341–361, 364–384, 430–450, 468–488, and 503–523; these read GWLT…HGFL, WGWS…PLSA, LGGC…YWVL, LSVP…MFVQ, and VMMI…AGLV.

It belongs to the OXA1/ALB3/YidC family. Type 1 subfamily. Interacts with the Sec translocase complex via SecD. Specifically interacts with transmembrane segments of nascent integral membrane proteins during membrane integration.

The protein resides in the cell inner membrane. Required for the insertion and/or proper folding and/or complex formation of integral membrane proteins into the membrane. Involved in integration of membrane proteins that insert both dependently and independently of the Sec translocase complex, as well as at least some lipoproteins. Aids folding of multispanning membrane proteins. The protein is Membrane protein insertase YidC of Cupriavidus pinatubonensis (strain JMP 134 / LMG 1197) (Cupriavidus necator (strain JMP 134)).